A 1418-amino-acid chain; its full sequence is Ankyrin repeat and fibronectin type-III domain-containing protein 1 (1418 aa).

The interval 119–236 (RDSVCSLPPP…DRGETPSLSE (118 aa)) is disordered. Positions 144-154 (PENTSINLSQC) are enriched in polar residues. A compositionally biased stretch (low complexity) spans 171 to 186 (SASPTSSTPLRTTSTP). A compositionally biased stretch (basic and acidic residues) spans 223 to 236 (LRDHDRGETPSLSE). 2 ANK repeats span residues 419–450 (QSSEALFEAVEQQDLDAVQILLFQYTADELDL) and 456–485 (EGLTPLDISIMTNNVPIAKLLLKAGGKESP). The Fibronectin type-III domain maps to 556 to 652 (APLMVRLSVT…LSQPPSAVPS (97 aa)). The tract at residues 893 to 900 (GLYLGYLK) is highly conserved peptide sequence. Disordered regions lie at residues 1134–1179 (VQKN…EVFL), 1321–1343 (LETPLSIPHSPTTSYSLDEYRQP), and 1361–1418 (KTSP…SSTL). The span at 1136 to 1146 (KNDSTSSNTDY) shows a compositional bias: polar residues. Residues 1407–1418 (NEQVSEILSSTL) show a composition bias toward polar residues.

In terms of biological role, required for vestibular-related functions. The protein is Ankyrin repeat and fibronectin type-III domain-containing protein 1 (ankfn1) of Danio rerio (Zebrafish).